The sequence spans 441 residues: Mitochondrial distribution and morphology protein 12 (441 aa).

An SMP-LTD domain is found at 1–441; it reads MSIDIDWERA…VYPSFWTFLV (441 aa). Disordered stretches follow at residues 70-89 and 180-289; these read YEDGDEDLSVSSEEQSPMRE and TPLR…RMRE. Composition is skewed to polar residues over residues 226-245 and 253-263; these read SRPSTVNTGNTLFSRGSVST and SSQTVLANNPG.

The protein belongs to the MDM12 family. As to quaternary structure, component of the ER-mitochondria encounter structure (ERMES) or MDM complex, composed of MMM1, MDM10, MDM12 and MDM34. An MMM1 homodimer associates with one molecule of MDM12 on each side in a pairwise head-to-tail manner, and the SMP-LTD domains of MMM1 and MDM12 generate a continuous hydrophobic tunnel for phospholipid trafficking.

It is found in the mitochondrion outer membrane. It localises to the endoplasmic reticulum membrane. In terms of biological role, component of the ERMES/MDM complex, which serves as a molecular tether to connect the endoplasmic reticulum (ER) and mitochondria. Components of this complex are involved in the control of mitochondrial shape and protein biogenesis, and function in nonvesicular lipid trafficking between the ER and mitochondria. MDM12 is required for the interaction of the ER-resident membrane protein MMM1 and the outer mitochondrial membrane-resident beta-barrel protein MDM10. The MDM12-MMM1 subcomplex functions in the major beta-barrel assembly pathway that is responsible for biogenesis of all mitochondrial outer membrane beta-barrel proteins, and acts in a late step after the SAM complex. The MDM10-MDM12-MMM1 subcomplex further acts in the TOM40-specific pathway after the action of the MDM12-MMM1 complex. Essential for establishing and maintaining the structure of mitochondria and maintenance of mtDNA nucleoids. The polypeptide is Mitochondrial distribution and morphology protein 12 (Paracoccidioides brasiliensis (strain Pb03)).